A 31-amino-acid polypeptide reads, in one-letter code: Photosystem II reaction center protein T (31 aa).

Residues 3–23 (AFSYTLLMALAAVTLFFAVAF) form a helical membrane-spanning segment.

This sequence belongs to the PsbT family. In terms of assembly, PSII is composed of 1 copy each of membrane proteins PsbA, PsbB, PsbC, PsbD, PsbE, PsbF, PsbH, PsbI, PsbJ, PsbK, PsbL, PsbM, PsbT, PsbX, PsbY, Psb30/Ycf12, peripheral proteins PsbO, CyanoQ (PsbQ), PsbU, PsbV and a large number of cofactors. It forms dimeric complexes.

Its subcellular location is the cellular thylakoid membrane. In terms of biological role, found at the monomer-monomer interface of the photosystem II (PS II) dimer, plays a role in assembly and dimerization of PSII. PSII is a light-driven water plastoquinone oxidoreductase, using light energy to abstract electrons from H(2)O, generating a proton gradient subsequently used for ATP formation. This Prochlorococcus marinus (strain MIT 9211) protein is Photosystem II reaction center protein T.